A 1348-amino-acid chain; its full sequence is ABC multidrug transporter atrD (1348 aa).

Positions 1–10 (MSPLETNPLS) are enriched in polar residues. A disordered region spans residues 1-67 (MSPLETNPLS…HRPKSSSSNN (67 aa)). Low complexity predominate over residues 20-31 (ETSTTEEQASTP). Asn99 carries N-linked (GlcNAc...) asparagine glycosylation. 4 helical membrane-spanning segments follow: residues 114–134 (ILIMVISTICAIAAGAALPLF), 168–188 (YFVYLGIGEFVTVYVSTVGFI), 240–260 (KVGLTLTALATFVTAFIIAYV), and 268–288 (ICSSTIVALVLTMGGGSQFII). An ABC transmembrane type-1 1 domain is found at 118-408 (VISTICAIAA…VSPNAQAFTN (291 aa)). Asn314 is a glycosylation site (N-linked (GlcNAc...) asparagine). Helical transmembrane passes span 344–364 (IVMGFMIGAMFGLMYSNYGLG) and 371–391 (FLVDGAVDVGDILTVLMAILI). The region spanning 443 to 688 (IELRNVKHIY…GGAYRKLVEA (246 aa)) is the ABC transporter 1 domain. 478–485 (GPSGSGKS) is an ATP binding site. A glycan (N-linked (GlcNAc...) asparagine) is linked at Asn550. 2 helical membrane-spanning segments follow: residues 778 to 798 (MLIGLVFSVLAGGGQPTQAVL) and 825 to 845 (LMFFVVGIIQFITQSTNGAAF). Residues 779 to 1068 (LIGLVFSVLA…VFSFAPDMGK (290 aa)) form the ABC transmembrane type-1 2 domain. N-linked (GlcNAc...) asparagine glycosylation is present at Asn877. The next 4 helical transmembrane spans lie at 892–912 (HLSGVSGVTLGTILMTSTTLG), 925–947 (LALVCISVVPVLLACGFYRFYML), 1015–1035 (ALVFFCVALGFWYGGTLLGHH), and 1042–1062 (FFVCFSEILFGAQSAGTVFSF). Residue Asn1088 is glycosylated (N-linked (GlcNAc...) asparagine). The ABC transporter 2 domain maps to 1103 to 1341 (IEFRNVHFRY…KGRYYELVNL (239 aa)). 1138–1145 (GPSGCGKS) serves as a coordination point for ATP.

Belongs to the ABC transporter superfamily. ABCB family. Multidrug resistance exporter (TC 3.A.1.201) subfamily.

The protein resides in the cell membrane. With respect to regulation, fenamirol efflux transporter activity is inhibited by the cyclosporin derivative PSC 833, nigericin, reserpine and valinomycin. The effect of reserpine is transiant, while that of the cyclosporin derivative PSC 833, nigericin and valinomycin is proportional to the time of exposure. Cyclohexinmide has inhibitory effect only when applied prior to addition of the fungicide. Functionally, pleiotropic ABC efflux transporter involved in the protection of the cells against a wide range of toxic compounds. Confers resistance to the azole fenarimol via efflux transport. May also be involved in the secretion of penicillin. This is ABC multidrug transporter atrD from Emericella nidulans (Aspergillus nidulans).